We begin with the raw amino-acid sequence, 292 residues long: uncharacterized protein (292 aa).

The chain crosses the membrane as a helical span at residues 175 to 197; that stretch reads VLNFYFTALPYAIDGIISGIGVF.

It is found in the membrane. This is an uncharacterized protein from Methanocaldococcus jannaschii (strain ATCC 43067 / DSM 2661 / JAL-1 / JCM 10045 / NBRC 100440) (Methanococcus jannaschii).